A 252-amino-acid polypeptide reads, in one-letter code: MNILLTNDDGIEAEGINTLAELLSKYHNVTMVAPENQRSASSHSITIYEPIIVKQVKKPYNVEAYSISGTPADCVRVALDKLVPDNIDMVISGINKGLNIGNDILYSGTVSAAIEGAMYKVPSMAVSAQFIKNKKENYKIAAKYALGMLNRLKKEDLKNDVVLNLNIPFCSEEEIKGIKVCKVGNKIFNTRFLEEIDKEGNKILKLEGDINEDIYEGTDVYYIRNKYVTLTPLHYDLTNFNILEETEQLFLS.

4 residues coordinate a divalent metal cation: Asp8, Asp9, Ser39, and Asn95.

It belongs to the SurE nucleotidase family. The cofactor is a divalent metal cation.

The protein localises to the cytoplasm. It carries out the reaction a ribonucleoside 5'-phosphate + H2O = a ribonucleoside + phosphate. Its function is as follows. Nucleotidase that shows phosphatase activity on nucleoside 5'-monophosphates. The sequence is that of 5'-nucleotidase SurE from Clostridium botulinum (strain Loch Maree / Type A3).